A 237-amino-acid chain; its full sequence is Orotidine 5'-phosphate decarboxylase (237 aa).

Substrate contacts are provided by residues Asp-17, Lys-39, Asp-66 to Thr-75, Thr-121, Arg-182, Gln-191, Gly-211, and Arg-212. Catalysis depends on Lys-68, which acts as the Proton donor.

The protein belongs to the OMP decarboxylase family. Type 1 subfamily. In terms of assembly, homodimer.

The enzyme catalyses orotidine 5'-phosphate + H(+) = UMP + CO2. It participates in pyrimidine metabolism; UMP biosynthesis via de novo pathway; UMP from orotate: step 2/2. Catalyzes the decarboxylation of orotidine 5'-monophosphate (OMP) to uridine 5'-monophosphate (UMP). This Bradyrhizobium diazoefficiens (strain JCM 10833 / BCRC 13528 / IAM 13628 / NBRC 14792 / USDA 110) protein is Orotidine 5'-phosphate decarboxylase.